A 382-amino-acid chain; its full sequence is Putative acetyl-CoA C-acetyltransferase VraB (382 aa).

Cys-86 (acyl-thioester intermediate) is an active-site residue. Catalysis depends on His-338, which acts as the Proton acceptor.

It belongs to the thiolase-like superfamily. Thiolase family.

In Staphylococcus epidermidis (strain ATCC 12228 / FDA PCI 1200), this protein is Putative acetyl-CoA C-acetyltransferase VraB (vraB).